The sequence spans 203 residues: Pyrrolidone-carboxylate peptidase 1 (203 aa).

Residues Glu-78, Cys-141, and His-165 contribute to the active site.

It belongs to the peptidase C15 family. As to quaternary structure, homotetramer.

It localises to the cytoplasm. The enzyme catalyses Release of an N-terminal pyroglutamyl group from a polypeptide, the second amino acid generally not being Pro.. Functionally, removes 5-oxoproline from various penultimate amino acid residues except L-proline. This Caldanaerobacter subterraneus subsp. tengcongensis (strain DSM 15242 / JCM 11007 / NBRC 100824 / MB4) (Thermoanaerobacter tengcongensis) protein is Pyrrolidone-carboxylate peptidase 1.